Reading from the N-terminus, the 275-residue chain is Putative protein A464R (275 aa).

One can recognise an RNase III domain in the interval 51–175 (KEDVEYLIGM…LMGAIYFDLG (125 aa)). Positions 201 to 269 (NYKDRLLKHT…SKIALHTMGV (69 aa)) constitute a DRBM domain.

The protein belongs to the ribonuclease III family.

This is Putative protein A464R from Chlorella (PBCV-1).